The primary structure comprises 792 residues: Kinesin-like protein KIF3C (792 aa).

The region spanning 10–363 (ALKVVARCRP…LRFANRAKNI (354 aa)) is the Kinesin motor domain. 97-104 (GQTGTGKT) serves as a coordination point for ATP. Disordered regions lie at residues 249–287 (GSERQNKAGPNTTGGTATQPTGGGGGGGGGGGGGERPKE), 397–418 (MLGKRLRRKSSRRKKAVSAPAG), and 749–792 (RPST…LDHE). The span at 257-268 (GPNTTGGTATQP) shows a compositional bias: low complexity. The span at 269 to 282 (TGGGGGGGGGGGGG) shows a compositional bias: gly residues. The stretch at 374 to 627 (KDTLLREFQE…QNEQTRELKL (254 aa)) forms a coiled coil. Residues 397 to 412 (MLGKRLRRKSSRRKKA) show a composition bias toward basic residues. Residues 628-792 (KYLIIENFIP…LRPTTVLDHE (165 aa)) are globular. Low complexity predominate over residues 773 to 792 (AHASLAASAALRPTTVLDHE).

This sequence belongs to the TRAFAC class myosin-kinesin ATPase superfamily. Kinesin family. Kinesin II subfamily. As to quaternary structure, heterodimer of KIF3A and KIF3C.

The protein localises to the cytoplasm. It is found in the cytoskeleton. Functionally, microtubule-based anterograde translocator for membranous organelles. In Bos taurus (Bovine), this protein is Kinesin-like protein KIF3C (KIF3C).